The primary structure comprises 548 residues: Membrane protein insertase YidC (548 aa).

The helical transmembrane segment at 6 to 26 (NLLVIALLFVSFMIWQAWEQD) threads the bilayer. A disordered region spans residues 28–55 (NPQPQAQQTTQTTTTAAGSAADQGVPAS). Positions 30-50 (QPQAQQTTQTTTTAAGSAADQ) are enriched in low complexity. The next 4 helical transmembrane spans lie at 350-370 (FVGN…GIMY), 420-440 (LGGC…YYML), 458-478 (LSAQ…MFFI), and 499-519 (PVIF…YYIV).

It belongs to the OXA1/ALB3/YidC family. Type 1 subfamily. Interacts with the Sec translocase complex via SecD. Specifically interacts with transmembrane segments of nascent integral membrane proteins during membrane integration.

It is found in the cell inner membrane. Functionally, required for the insertion and/or proper folding and/or complex formation of integral membrane proteins into the membrane. Involved in integration of membrane proteins that insert both dependently and independently of the Sec translocase complex, as well as at least some lipoproteins. Aids folding of multispanning membrane proteins. The protein is Membrane protein insertase YidC of Shigella flexneri.